A 135-amino-acid polypeptide reads, in one-letter code: Galectin-1 (135 aa).

N-acetylalanine is present on Ala2. The 132-residue stretch at 4 to 135 (GLVASNLNLK…DFKIKCVAFE (132 aa)) folds into the Galectin domain. 3 positions are modified to N6-acetyllysine: Lys13, Lys19, and Lys29. Ser30 bears the Phosphoserine mark. A beta-D-galactoside contacts are provided by residues 45–49 (HFNPR), His53, Asn62, and 69–72 (WGTE). An N6-acetyllysine; alternate modification is found at Lys108. Lys108 bears the N6-succinyllysine; alternate mark. At Lys128 the chain carries N6-acetyllysine.

Binds LGALS3BP. Interacts with CD2, CD3, CD4, CD6, CD7, CD43, ALCAM and CD45. Interacts with laminin. Interacts with SUSD2. Exists in a reversible and active monomer-homodimer equilibrium, the mononomer/dimer state is regulated by lectin concentration. Interacts with cargo receptor TMED10; the interaction mediates the translocation from the cytoplasm into the ERGIC (endoplasmic reticulum-Golgi intermediate compartment) and thereby secretion.

The protein localises to the cytoplasm. Its subcellular location is the secreted. The protein resides in the extracellular space. It localises to the extracellular matrix. In terms of biological role, lectin that binds beta-galactoside and a wide array of complex carbohydrates. Plays a role in regulating apoptosis, cell proliferation and cell differentiation. Inhibits CD45 protein phosphatase activity and therefore the dephosphorylation of Lyn kinase. Strong inducer of T-cell apoptosis. This Cricetulus griseus (Chinese hamster) protein is Galectin-1 (LGALS1).